The following is a 247-amino-acid chain: MSKLFWAMLAFISRLPVPTRWSQGLDFEEYSRGIVTFPLIGMLLGAIGGLVFVALQSWCGIPLAALFCVLTLALLTGGFHLDGLADTCDGIFSARRRERMLEIMRDSRLGTHGGLALIFVLLAKVLVISELALRGTPMLAALAMACAAGRGVAVLLMYRHRYAREEGLGNVFIGKVTGRQTCVTLGLTAILAAILMPGMHGVAALVVTLAAIFILGQLLKRTLGGQTGDTLGAAIELGELIFLLALL.

The next 6 membrane-spanning stretches (helical) occupy residues 34-54 (IVTFPLIGMLLGAIGGLVFVA), 59-79 (CGIPLAALFCVLTLALLTGGF), 113-133 (GGLALIFVLLAKVLVISELAL), 138-158 (MLAALAMACAAGRGVAVLLMY), 171-193 (VFIGKVTGRQTCVTLGLTAILAA), and 194-214 (ILMPGMHGVAALVVTLAAIFI).

The protein belongs to the CobS family. It depends on Mg(2+) as a cofactor.

It is found in the cell inner membrane. It catalyses the reaction alpha-ribazole + adenosylcob(III)inamide-GDP = adenosylcob(III)alamin + GMP + H(+). The catalysed reaction is alpha-ribazole 5'-phosphate + adenosylcob(III)inamide-GDP = adenosylcob(III)alamin 5'-phosphate + GMP + H(+). The protein operates within cofactor biosynthesis; adenosylcobalamin biosynthesis; adenosylcobalamin from cob(II)yrinate a,c-diamide: step 7/7. Joins adenosylcobinamide-GDP and alpha-ribazole to generate adenosylcobalamin (Ado-cobalamin). Also synthesizes adenosylcobalamin 5'-phosphate from adenosylcobinamide-GDP and alpha-ribazole 5'-phosphate. This chain is Adenosylcobinamide-GDP ribazoletransferase, found in Citrobacter koseri (strain ATCC BAA-895 / CDC 4225-83 / SGSC4696).